The chain runs to 177 residues: Parathyroid hormone-related protein (177 aa).

An N-terminal signal peptide occupies residues 1 to 24; sequence MLRRLVQQWSVAVFLLSYSVPSCG. The propeptide occupies 25-34; it reads RSVEGPGRRL. The important for receptor binding stretch occupies residues 57 to 68; it reads RFFLHHLIAEIH. Positions 74–177 are disordered; that stretch reads ATSEVSPNSK…PEPELDSRRH (104 aa). The span at 76-90 shows a compositional bias: polar residues; that stretch reads SEVSPNSKPAANTKN. The short motif at 108–129 is the Nuclear localization signal element; the sequence is TNKVEPYKEQPLKTPGKKKKGK. Residues 109–118 are compositionally biased toward basic and acidic residues; that stretch reads NKVEPYKEQP. Basic residues predominate over residues 122–132; the sequence is PGKKKKGKPGK.

It belongs to the parathyroid hormone family. As to quaternary structure, PTHrP interacts with PTH1R (via N-terminal extracellular domain). Post-translationally, there are several secretory forms, including osteostatin, arising from endoproteolytic cleavage of the initial translation product. Each of these secretory forms is believed to have one or more of its own receptors that mediates the normal paracrine, autocrine and endocrine actions.

The protein localises to the secreted. It localises to the cytoplasm. The protein resides in the nucleus. Functionally, neuroendocrine peptide which is a critical regulator of cellular and organ growth, development, migration, differentiation and survival and of epithelial calcium ion transport. Acts by binding to its receptor, PTH1R, activating G protein-coupled receptor signaling. Regulates endochondral bone development and epithelial-mesenchymal interactions during the formation of the mammary glands and teeth. Required for skeletal homeostasis. Promotes mammary mesenchyme differentiation and bud outgrowth by modulating mesenchymal cell responsiveness to BMPs. Up-regulates BMPR1A expression in the mammary mesenchyme and this increases the sensitivity of these cells to BMPs and allows them to respond to BMP4 in a paracrine and/or autocrine fashion. BMP4 signaling in the mesenchyme, in turn, triggers epithelial outgrowth and augments MSX2 expression, which causes the mammary mesenchyme to inhibit hair follicle formation within the nipple sheath. In terms of biological role, potent inhibitor of osteoclastic bone resorption. In Oryctolagus cuniculus (Rabbit), this protein is Parathyroid hormone-related protein (PTHLH).